We begin with the raw amino-acid sequence, 320 residues long: Acetyl-coenzyme A carboxylase carboxyl transferase subunit beta (320 aa).

A CoA carboxyltransferase N-terminal domain is found at 25-294; it reads LWRKCPECGT…AIVGDLPAPD (270 aa). Positions 29, 32, 48, and 51 each coordinate Zn(2+). The C4-type zinc finger occupies 29–51; the sequence is CPECGTMLFHRELSDNLFVCISC. The interval 290-320 is disordered; that stretch reads LPAPDPAPATPEPQKAAPSAPAQDKPGAGRS.

Belongs to the AccD/PCCB family. In terms of assembly, acetyl-CoA carboxylase is a heterohexamer composed of biotin carboxyl carrier protein (AccB), biotin carboxylase (AccC) and two subunits each of ACCase subunit alpha (AccA) and ACCase subunit beta (AccD). Zn(2+) is required as a cofactor.

It is found in the cytoplasm. The enzyme catalyses N(6)-carboxybiotinyl-L-lysyl-[protein] + acetyl-CoA = N(6)-biotinyl-L-lysyl-[protein] + malonyl-CoA. It functions in the pathway lipid metabolism; malonyl-CoA biosynthesis; malonyl-CoA from acetyl-CoA: step 1/1. Its function is as follows. Component of the acetyl coenzyme A carboxylase (ACC) complex. Biotin carboxylase (BC) catalyzes the carboxylation of biotin on its carrier protein (BCCP) and then the CO(2) group is transferred by the transcarboxylase to acetyl-CoA to form malonyl-CoA. This is Acetyl-coenzyme A carboxylase carboxyl transferase subunit beta from Dinoroseobacter shibae (strain DSM 16493 / NCIMB 14021 / DFL 12).